Reading from the N-terminus, the 268-residue chain is Imidazole glycerol phosphate synthase subunit HisF (268 aa).

Residues aspartate 12 and aspartate 131 contribute to the active site.

This sequence belongs to the HisA/HisF family. Heterodimer of HisH and HisF.

Its subcellular location is the cytoplasm. It carries out the reaction 5-[(5-phospho-1-deoxy-D-ribulos-1-ylimino)methylamino]-1-(5-phospho-beta-D-ribosyl)imidazole-4-carboxamide + L-glutamine = D-erythro-1-(imidazol-4-yl)glycerol 3-phosphate + 5-amino-1-(5-phospho-beta-D-ribosyl)imidazole-4-carboxamide + L-glutamate + H(+). It functions in the pathway amino-acid biosynthesis; L-histidine biosynthesis; L-histidine from 5-phospho-alpha-D-ribose 1-diphosphate: step 5/9. In terms of biological role, IGPS catalyzes the conversion of PRFAR and glutamine to IGP, AICAR and glutamate. The HisF subunit catalyzes the cyclization activity that produces IGP and AICAR from PRFAR using the ammonia provided by the HisH subunit. This is Imidazole glycerol phosphate synthase subunit HisF from Methanocorpusculum labreanum (strain ATCC 43576 / DSM 4855 / Z).